The primary structure comprises 179 residues: Putative ankyrin repeat protein RF_0922 (179 aa).

ANK repeat units lie at residues 5-34, 40-72, 75-104, 110-139, and 145-174; these read KGCT…EQAI, NGST…INHV, NGNT…SQAI, NGDT…EQAI, and NGNT…KQAI.

This is Putative ankyrin repeat protein RF_0922 from Rickettsia felis (strain ATCC VR-1525 / URRWXCal2) (Rickettsia azadi).